A 93-amino-acid chain; its full sequence is Integration host factor subunit beta (93 aa).

This sequence belongs to the bacterial histone-like protein family. In terms of assembly, heterodimer of an alpha and a beta chain.

Functionally, this protein is one of the two subunits of integration host factor, a specific DNA-binding protein that functions in genetic recombination as well as in transcriptional and translational control. This chain is Integration host factor subunit beta, found in Glaesserella parasuis serovar 5 (strain SH0165) (Haemophilus parasuis).